The following is a 382-amino-acid chain: Beta-lactamase CMY-10 (382 aa).

The signal sequence occupies residues 1-23; the sequence is MQQRQSILWGAVATLMWAGLAHA. The Acyl-ester intermediate role is filled by Ser-88. AMP is bound at residue Ser-88. GMP contacts are provided by Ser-88, Gln-144, Tyr-174, Thr-336, Ser-338, and Asn-363. Positions 88, 144, 174, 336, 338, and 363 each coordinate IMP. Tyr-174 contributes to the AMP binding site. AMP is bound at residue Ser-338.

It belongs to the class-C beta-lactamase family. In terms of assembly, monomer.

It catalyses the reaction a beta-lactam + H2O = a substituted beta-amino acid. Its activity is regulated as follows. Inhibited by various nucleotides in vitro, including adenosine 5'-(P-acetyl)monophosphate (acAMP), inosine-5'-monophosphate (IMP) and guanosine-5'-monophosphate (GMP); IMP and GMP exhibit strongest competitive inhibition. Inhibited by the beta-lactamase-blocking agent, avibactam. Inhibited by clavulanic acid. Weakly inhibited by citric acid. Its function is as follows. Class C beta-lactamase which confers resistance to penicillins and cephalosporins. Has benzylpenicillin-, ceftazidime-, nitrocefin- and imipenem-hydrolyzing activity. The chain is Beta-lactamase CMY-10 from Klebsiella aerogenes (Enterobacter aerogenes).